The sequence spans 523 residues: Translation initiation factor eIF2B subunit delta (523 aa).

The segment at 1-154 is disordered; that stretch reads MAAVAVAVRE…EHTQADDPTL (154 aa). At Ala2 the chain carries N-acetylalanine. Residue Ser12 is modified to Phosphoserine. Positions 31-40 are enriched in basic and acidic residues; sequence MTQEEKLQLR. A compositionally biased stretch (basic residues) spans 41–51; the sequence is KEKKQQKKKRK. Phosphothreonine is present on Thr85. Positions 95–120 are enriched in basic and acidic residues; the sequence is TKAELRAERRAKQEAERALKQARKGE. Position 129 is a phosphoserine (Ser129). A may bind the chemical integrated stress response (ISR) inhibitor ISRIB region spans residues 170–179; that stretch reads RKDYGSKVSL.

The protein belongs to the eIF-2B alpha/beta/delta subunits family. As to quaternary structure, component of the translation initiation factor 2B (eIF2B) complex which is a heterodecamer of two sets of five different subunits: alpha, beta, gamma, delta and epsilon. Subunits alpha, beta and delta comprise a regulatory subcomplex and subunits epsilon and gamma comprise a catalytic subcomplex. Within the complex, the hexameric regulatory complex resides at the center, with the two heterodimeric catalytic subcomplexes bound on opposite sides.

It localises to the cytoplasm. The protein resides in the cytosol. Activated by the chemical integrated stress response (ISR) inhibitor ISRIB which stimulates guanine nucleotide exchange factor activity for both phosphorylated and unphosphorylated eIF2. Its function is as follows. Acts as a component of the translation initiation factor 2B (eIF2B) complex, which catalyzes the exchange of GDP for GTP on eukaryotic initiation factor 2 (eIF2) gamma subunit. Its guanine nucleotide exchange factor activity is repressed when bound to eIF2 complex phosphorylated on the alpha subunit, thereby limiting the amount of methionyl-initiator methionine tRNA available to the ribosome and consequently global translation is repressed. The polypeptide is Translation initiation factor eIF2B subunit delta (EIF2B4) (Oryctolagus cuniculus (Rabbit)).